The following is a 229-amino-acid chain: MAPHDPGSLTTLVPWAAALLLALGVERALALPEICTQCPGSVQNLSKVAFYCKTTRELMLHARCCLNQKGTILGLDLQNCSLEDPGPNFHQAHTTVIIDLQANPLKGDLANTFRGFTQLQTLILPQHVNCPGGINAWNTITSYIDNQICQGQKNLCNNTGDPEMCPENGSCVPDGPGLLQCVCADGFHGYKCMRQGSFSLLMFFGILGATTLSVSILLWATQRRKAKTS.

The N-terminal stretch at 1–30 (MAPHDPGSLTTLVPWAAALLLALGVERALA) is a signal peptide. At 31–199 (LPEICTQCPG…YKCMRQGSFS (169 aa)) the chain is on the extracellular side. Residues asparagine 44, asparagine 79, asparagine 157, and asparagine 168 are each glycosylated (N-linked (GlcNAc...) asparagine). The region spanning 152 to 193 (QKNLCNNTGDPEMCPENGSCVPDGPGLLQCVCADGFHGYKCM) is the EGF-like domain. Cystine bridges form between cysteine 156–cysteine 171, cysteine 165–cysteine 181, and cysteine 183–cysteine 192. The helical transmembrane segment at 200–220 (LLMFFGILGATTLSVSILLWA) threads the bilayer. The Cytoplasmic segment spans residues 221–229 (TQRRKAKTS).

As to quaternary structure, interacts with NELL1; the interaction promotes osteoblastic differentiation and mineralization. Interacts with SLC37A3; the interaction is direct and both proteins are mutually dependent for their stability. In terms of tissue distribution, weakly expressed in hematopoietic cell lines.

Its subcellular location is the nucleus envelope. It localises to the cell membrane. It is found in the lysosome membrane. In terms of biological role, promotes osteoblast cell differentiation and terminal mineralization. Plays a role in inducing the cell cycle arrest via inhibiting CCND1 expression in all-trans-retinoic acid (ATRA) signal pathway. In osteoclasts, forms a transporter complex with ATRAID for nitrogen-containing-bisphophonates (N-BPs) required for releasing N-BP molecules that have trafficked to lysosomes through fluid-phase endocytosis into the cytosol. The chain is All-trans retinoic acid-induced differentiation factor from Homo sapiens (Human).